Consider the following 254-residue polypeptide: 3-dehydroquinate dehydratase (254 aa).

3-dehydroquinate-binding positions include 47–49 and Arg83; that span reads EFR. His144 serves as the catalytic Proton donor/acceptor. Catalysis depends on Lys171, which acts as the Schiff-base intermediate with substrate. 3-dehydroquinate-binding residues include Arg213, Ser232, and Gln236.

It belongs to the type-I 3-dehydroquinase family. As to quaternary structure, homodimer.

The catalysed reaction is 3-dehydroquinate = 3-dehydroshikimate + H2O. It functions in the pathway metabolic intermediate biosynthesis; chorismate biosynthesis; chorismate from D-erythrose 4-phosphate and phosphoenolpyruvate: step 3/7. Functionally, involved in the third step of the chorismate pathway, which leads to the biosynthesis of aromatic amino acids. Catalyzes the cis-dehydration of 3-dehydroquinate (DHQ) and introduces the first double bond of the aromatic ring to yield 3-dehydroshikimate. This chain is 3-dehydroquinate dehydratase, found in Neisseria meningitidis serogroup B (strain ATCC BAA-335 / MC58).